The primary structure comprises 76 residues: Parvalbumin beta 3 (76 aa).

Position 1 is an N-acetylalanine (Ala-1). Residues Lys-31 to Gly-66 enclose the EF-hand domain. Ca(2+)-binding residues include Asp-44, Asp-46, Ser-48, Phe-50, Glu-52, and Glu-55.

The protein belongs to the parvalbumin family.

In muscle, parvalbumin is thought to be involved in relaxation after contraction. It binds two calcium ions. In Merluccius polylepis (Southern hake), this protein is Parvalbumin beta 3.